Consider the following 148-residue polypeptide: UPF0179 protein Mevan_0979 (148 aa).

The protein belongs to the UPF0179 family.

This chain is UPF0179 protein Mevan_0979, found in Methanococcus vannielii (strain ATCC 35089 / DSM 1224 / JCM 13029 / OCM 148 / SB).